Consider the following 586-residue polypeptide: Protein HOL1 (586 aa).

Residues Met-1–His-66 lie on the Extracellular side of the membrane. The helical transmembrane segment at Phe-67 to Ala-87 threads the bilayer. Residues Gln-88–Asn-103 are Cytoplasmic-facing. The helical transmembrane segment at Thr-104–Ala-124 threads the bilayer. Over Asn-125–Lys-130 the chain is Extracellular. A helical transmembrane segment spans residues Ile-131–Lys-151. Residues Arg-152–Ser-189 are Cytoplasmic-facing. Residues Val-190–Gly-210 form a helical membrane-spanning segment. Topologically, residues Tyr-211–Arg-219 are extracellular. Residues Trp-220–Cys-240 traverse the membrane as a helical segment. Residues Glu-241–Arg-362 are Cytoplasmic-facing. Residues Met-363–Leu-383 traverse the membrane as a helical segment. Topologically, residues Thr-384 to Thr-413 are extracellular. The chain crosses the membrane as a helical span at residues Leu-414–Trp-434. At Met-435–Arg-448 the chain is on the cytoplasmic side. A helical transmembrane segment spans residues Leu-449–Gly-469. Residues Thr-470–Gln-477 are Extracellular-facing. The chain crosses the membrane as a helical span at residues Ala-478–Met-498. The Cytoplasmic segment spans residues Ala-499–Met-508. The chain crosses the membrane as a helical span at residues Val-509–Phe-529. Residues Thr-530–Tyr-544 lie on the Extracellular side of the membrane. Residues Ile-545–Gly-565 form a helical membrane-spanning segment. Residues Lys-566–Val-586 lie on the Cytoplasmic side of the membrane.

The protein localises to the membrane. Seems to be involved in the uptake of several cations and of histidinol. This is Protein HOL1 (HOL1) from Saccharomyces cerevisiae (strain ATCC 204508 / S288c) (Baker's yeast).